Here is a 437-residue protein sequence, read N- to C-terminus: Chromosomal replication initiator protein DnaA (437 aa).

A domain I, interacts with DnaA modulators region spans residues 1 to 69 (MLGDTTLKQL…AHLFELSTGI (69 aa)). The tract at residues 69-100 (IRPKIEIRLGSLKKDVKSSSPKAGVSKGQKST) is domain II. The domain III, AAA+ region stretch occupies residues 101–315 (ILNPSFTFDS…GIIIKLNAYA (215 aa)). ATP-binding residues include G145, G147, K148, and T149. Residues 316 to 437 (NLMNQEITLQ…ELKNKIKSRN (122 aa)) are domain IV, binds dsDNA.

This sequence belongs to the DnaA family. Oligomerizes as a right-handed, spiral filament on DNA at oriC.

It localises to the cytoplasm. Plays an essential role in the initiation and regulation of chromosomal replication. ATP-DnaA binds to the origin of replication (oriC) to initiate formation of the DNA replication initiation complex once per cell cycle. Binds the DnaA box (a 9 base pair repeat at the origin) and separates the double-stranded (ds)DNA. Forms a right-handed helical filament on oriC DNA; dsDNA binds to the exterior of the filament while single-stranded (ss)DNA is stabiized in the filament's interior. The ATP-DnaA-oriC complex binds and stabilizes one strand of the AT-rich DNA unwinding element (DUE), permitting loading of DNA polymerase. After initiation quickly degrades to an ADP-DnaA complex that is not apt for DNA replication. Binds acidic phospholipids. In Wolinella succinogenes (strain ATCC 29543 / DSM 1740 / CCUG 13145 / JCM 31913 / LMG 7466 / NCTC 11488 / FDC 602W) (Vibrio succinogenes), this protein is Chromosomal replication initiator protein DnaA.